Consider the following 485-residue polypeptide: UDP-N-acetylmuramate--L-alanine ligase (485 aa).

ATP is bound at residue 120–126 (GSHGKTT).

Belongs to the MurCDEF family.

The protein localises to the cytoplasm. It catalyses the reaction UDP-N-acetyl-alpha-D-muramate + L-alanine + ATP = UDP-N-acetyl-alpha-D-muramoyl-L-alanine + ADP + phosphate + H(+). Its pathway is cell wall biogenesis; peptidoglycan biosynthesis. In terms of biological role, cell wall formation. The chain is UDP-N-acetylmuramate--L-alanine ligase from Rickettsia peacockii (strain Rustic).